The following is a 4076-amino-acid chain: MGKITKTMQQKHRDTLSPWLKEFVDTASSAPLPLILQRLDEFPRRWMFPRGDLYHWIPLLNRFDNILESICATYELSKGPQTRDFGRDVLLNNGGPSLEYRDEPWTVERLAEAGYKEDGDCQLLVAILKFTRMLLEHCGNRSIYASSHHIDRLLNSPYLEVQAAALEVGLELAQRYNASVKRMPSPPRSVNPTLLANHYNIDLEKVQLLARPFVRTPIVKSLEASSAAPAVSAGSTAKAKDKEKEKEKATGPKNVASMYANDLKALASSRPDEEDLWKSWGDLKMSYYPDTTNGEPSARDSKDAQPVEPRTTSSPAAPTPLRRSSTMNVSQSSRTQRVGSSEEGSPLKPSGAATDDRDGPKVVEIPRSVIESKRIYDLYDMCPSDMPATMKFEFTSRLRTCKALLGTHRERQLALAVRLLAITNLAYILPEAVFVDKVLKYDKDEPRTFQLVYQLAELIAPSPDGNPSEVPKWLQSITLALLEAISHQQEKHSDVLAALNVNVNHGILLYVIRIAVAEMKEDAPVDDQDELDADNWRGNLFGLTLQIAMATRIGQEMMTAGLMDCLVEILNLRTAVASRHYSMVLAFLDSLTYAYQTAFSQLNSAGGLDAITNLIVHTVGESKTLTEAGLGTKPELHASLVDYSIPFYHQQTLKWLLKFIHHVMANTYSFDGTNTERLLRNLVDNSSLLGSLCTIARQNRFFGTVVWSNATTLLSDFINNDPTSFAAISESGWIQAFLESVTNRPVSIPAEQPSLEPSQSRANDGSEGNDADDDSEDDGSAHDAAPDSDGQAATQPHPPTQEMLEAPRDFPPAHGILPSSESMNIIPTVLNSISLNNRGMKMVLSSGAIQSYMEIFESATHVQCMAHDPELASTIGSSLDELSRHHPALRPAIANAIIDMIARVTHLVKTMDATKACGARLEAPESSASPVAEPAQATEVKGKGKEKATDDTDVEMAEASSSSSGNNKPAQAPSIPYIQVLSTFLQPIISNSHLKGALISAGVIEILLDLAESPSLPHDFGETPACRMLVAAISQLIESAQIVGLPSLLFRMENTVKVLQPRINPTTTEPFFAPFLTLNSSVSPVQDEEPASEKRTPDVSSGTETVKALLNIQTMIKILYHCFPFSNRSQMVSMPAVNVYDYYIRLIQSLGPLLRGVLKEEAAVNGAVPHHWTLKNKPYQTNSLGSRTDVQDLLTDSAAQDSSANGKKLTPEEQSTAEYKNFQTLRVLLHSFMPSIFPFFQTIGKALLPRRNNNDPYIRSRHLAIAEASAETLIQQLQQSKAELTVRDIHNWIIMIHTFGEMVVDTNHRTASGGAFLILPVITAFKELGGFEALNVMLKRLADMVSTGATEGQEATKAKLSMIGMKKVLDIYCFIISGKNLSDSMAQIALAPKPTERTTREFSHQLVVELRMSILPVVREIWASNIIEKSTGTVVSKIIDIIKTIAAGDLESNAQSRSDKESLPHLFKNRESVPFKWISRKDAETLATEQGVDVDLALEALYRANGKESDTKEYIKYQKAHLVRNRNPVPAEDAFKEVPSPNLSSSAGMSLSNLLNTPTFPVSDLLGAEPMALDPVPNQPLGEASGETALGHATESSEDGSDEGQPGTSRETNVGASTTAPQQLPVLPSQQPATESQSNTPRITREDLVEERAKLYDTLIDRSLEVISSHPEAVFEVADLIQNTILKTDNEDRRVEVGEILANALMSFASDDADELKENGSSIAAYAHLLALLLQQTAFMRTTVDMLRDYVGDYLGFLKLPPASSNDSLPPWIPYILLIFEIMLFKDAQPPDIKWKQPVKEDDPIEESVIEVKEPNFLAEHRSSLLTTLLDFLPRIGKEESLAVSVLRILVVLTRDHAVAKIVGEKKNLQRLFVMAKQLCGAGSTRLKQTHISEHIRQILRHIIEDEETLRQIFETDIRHLMTSRQRPSAAPGLEPQAYLRTQAHLALRSPKTFVEVSTELLKLNRAVSHLGDGTLRSTPFLVLKERPADASVSPKESSVEPAVQATEDLTISDVKPSTEVTDKDMHDAPKNPAQDLKRPILEHPDGVVHFLLTELLNYKDVDERENVPAPPAAASKPESDATAANEATPSPSGDEQNSESKEKEKKLAKSPFKAEDHPIFIYRCFLLDCLAELLQSYNRAKVEFINFKRSAPVQANAPVKPRSSVLNYILNDLLCFSPASGVPESIAMKKKAATAVPARAVLVALVSKTGEKPQNRTHEPFEYDDEPDLLFIRRFVLDTILRAYKDASVSGEPADIRYGKMNALAELMAQMIGEGDKDSRPNNPRGTDPSIGRSQAQLKRLMYEKGYLTSLTASIADIDLTFPHNRAPLKPILAVIKTLSKTAVSMSQLGLIPASGTAGTDQAEDEFLSDGSSVSEDLTDDREETPDLYRNSTLGMLEPGRDDEFSDEDEDDDEDMYDDEQYDDELDYGDDMSQDNEDNPSDEEDDLGEMGEMGGMPGQPGVVEVLMGENDDEEDNDDMDDMDEDDEMDEDDEQELSDEDEDEEVGSEDMDDLEDDIHIVDEEGNAIDDDGASWDDGTDEDEEDEEELDYEAEAQNMQEAQLHNRRTFPEIMRAAMENAGDDLDAEPIRDFDGHYIDDDEDGEEDDDEDEGEDDMDDDMYFDGDGLHDDLLAPNMPSGLGWDIAIEPNHRHRPSRSPWPNSPFVVGRHRDAIDFQNFFRRPAHLSRHLPPPADVMSGTNPLLLPQSRREVPRHAHSQLVRLGITPNMIGGLGMGMGVEPLAFISDLVQHLPDVRLSAGGGPLALHFTADGPGGIIRELNAIPIPPPHSRESRPTEARRDTYQEPHQAVQFSPESTHERWQQEVKMIFGFGYQDKAQKLAPLILSKLTPAAIQAEKEEKARKAEADRKAEEERKKRQEEERKKREAKEAEEKAAREKKEAEERERLERERAEAAAQAAAQAAADQEANAVSQEAHPMEGVETQGPGENAEQQAEDERPRVYYTLRNQQIDITELGIDAEYLEALPEEFRDEVIAQAISTRRSQAREQVSQEGENTEVFQEFLEALPEELRNEILHQEQHEQRRRERQNAAGGQDLGPADMDPASILLTFPPGLRQQVLLDQGEDIMEHLGPELAAEARTLVARHRQLHAQQGGQAASRSRDAQRPTEAGAGTVQKIQKRTVVQMLDKQGIATLLRLMFVSQQGSIRSSLFSIFANLCENRQNRLDVISSLLQILQDGCANMDAVERSFAQISHKAKQLKEKDAKTPHPLKRSLTGGTNNNGQFPASSEVSPLLIVQQCLDLLVELSKLNPHIPSVFLTEHETVASTLKRSLSRKGKGKDVNGKAQKFAINSLLTLLDRSLVMESSAVMQVLADLLNKVTIPLQAIERRRKEAEEQAKKKKEAEEKAATEREAANAPEEQASTSTEQTPAQQEATQQPSESTPAAASGQQPAQQDQENKELEAPKEKADEKDVQSDEKKIRQLTPPTIPEHNLKLVINIFVARECSSKTFQNTISTIKNLSNIPGAKKVFGDELVRQARVLSENILSDLDNLLPHILKAESGTQIQGVALAKFSPGASEQNKLLRVLTALDHLFDSKSKKQDKPAEGENTKEDLLGSLYWNPTFGKMWDKLSACLSAIRQRDNMLNVATILLPLIESLMVVCKNTTLSDASAVSNANSQKEMLLTSPPPEDRIAGLFFTFTEEHRRILNELVRHNPKLMSGTFSLLVKNPKVLEFDNKRNYFNRSVHSKYQQTRHSFPPLQLQVRREHVFHDSFRSLYYKKADELKFGKLNIRFQGEEGVDAGGVTREWFQVLSRQMFDPNYVLFVPVSSDRTTFHPNKLSPINDEHLPFFKFIGRIIGKALYEGRLLECYFSRAVYKRILGKPVSVKDMESFDPDYYKSLVWMLENDITDIITETFSVEDDVFGEVKVVDLIENGRNIPVTEENKHEYVRLIVEHKLITSVKDQMKAFLTGFHEIIPEELIAIFNEQELELLISGLPDIDIDDWKANTEYHNYSAGAPQIQWFWRAVRSFDKEELAKLLQFVTGTSKVPLNGFKELEGMNGVSRFNIHRDYGSKDRLPSSHTCFNQLDLPEYENYETLRSQLLKAITAGSDYFGFA.

The span at 225-237 shows a compositional bias: low complexity; it reads SSAAPAVSAGSTA. Disordered regions lie at residues 225–256, 288–360, 748–819, 921–970, 1083–1103, 1571–1646, 1988–2041, 2067–2110, 2275–2295, 2356–2551, 2581–2634, 2782–2817, 2858–2955, 3037–3066, 3105–3132, 3216–3241, and 3353–3444; these read SSAAPAVSAGSTAKAKDKEKEKEKATGPKNVA, YPDT…RDGP, IPAE…ILPS, LEAP…NKPA, SPVQDEEPASEKRTPDVSSGT, MALD…ITRE, PADA…KRPI, NVPA…KLAK, EGDKDSRPNNPRGTDPSIGRS, SGTA…ELDY, GDDL…LLAP, IPIPPPHSRESRPTEARRDTYQEPHQAVQFSPESTH, EKAR…QAED, EQHEQRRRERQNAAGGQDLGPADMDPASIL, RQLHAQQGGQAASRSRDAQRPTEAGAGT, KQLKEKDAKTPHPLKRSLTGGTNNNG, and EEQA…QLTP. A compositionally biased stretch (basic and acidic residues) spans 238–250; the sequence is KAKDKEKEKEKAT. Residues 311–320 are compositionally biased toward low complexity; it reads TTSSPAAPTP. A compositionally biased stretch (polar residues) spans 322-343; that stretch reads RRSSTMNVSQSSRTQRVGSSEE. The segment covering 767 to 778 has biased composition (acidic residues); that stretch reads EGNDADDDSEDD. Residues 940-950 are compositionally biased toward basic and acidic residues; it reads VKGKGKEKATD. Over residues 959 to 969 the composition is skewed to polar residues; that stretch reads ASSSSSGNNKP. A compositionally biased stretch (polar residues) spans 1606–1620; it reads PGTSRETNVGASTTA. Positions 1621 to 1632 are enriched in low complexity; it reads PQQLPVLPSQQP. A compositionally biased stretch (polar residues) spans 1633–1642; sequence ATESQSNTPR. Basic and acidic residues predominate over residues 2021-2041; sequence VTDKDMHDAPKNPAQDLKRPI. The span at 2086-2096 shows a compositional bias: polar residues; the sequence is NEATPSPSGDE. A compositionally biased stretch (basic and acidic residues) spans 2099 to 2110; sequence SESKEKEKKLAK. Acidic residues-rich tracts occupy residues 2378–2387 and 2405–2450; these read DLTDDREETP and EFSD…DLGE. Residues 2460–2469 are compositionally biased toward low complexity; the sequence is QPGVVEVLMG. Composition is skewed to acidic residues over residues 2470–2516 and 2523–2551; these read ENDD…DLED and EEGNAIDDDGASWDDGTDEDEEDEEELDY. Positions 2587–2597 are enriched in basic and acidic residues; it reads EPIRDFDGHYI. A compositionally biased stretch (acidic residues) spans 2598 to 2622; that stretch reads DDDEDGEEDDDEDEGEDDMDDDMYF. Composition is skewed to basic and acidic residues over residues 2788-2803 and 2858-2912; these read HSRESRPTEARRDTYQ and EKAR…ERAE. Positions 2851–2929 form a coiled coil; that stretch reads AIQAEKEEKA…QAAADQEANA (79 aa). The span at 2913–2927 shows a compositional bias: low complexity; the sequence is AAAQAAAQAAADQEA. Over residues 3037–3047 the composition is skewed to basic and acidic residues; sequence EQHEQRRRERQ. Polar residues predominate over residues 3108–3117; it reads HAQQGGQAAS. Residues 3341–3375 are a coiled coil; it reads PLQAIERRRKEAEEQAKKKKEAEEKAATEREAANA. Residues 3353–3372 show a composition bias toward basic and acidic residues; it reads EEQAKKKKEAEEKAATEREA. Residues 3373-3414 are compositionally biased toward low complexity; sequence ANAPEEQASTSTEQTPAQQEATQQPSESTPAAASGQQPAQQD. Positions 3415 to 3439 are enriched in basic and acidic residues; it reads QENKELEAPKEKADEKDVQSDEKKI. Residues 3740–4076 form the HECT domain; it reads KADELKFGKL…TAGSDYFGFA (337 aa). The active-site Glycyl thioester intermediate is cysteine 4043.

It belongs to the UPL family. TOM1/PTR1 subfamily.

It localises to the nucleus. The catalysed reaction is S-ubiquitinyl-[E2 ubiquitin-conjugating enzyme]-L-cysteine + [acceptor protein]-L-lysine = [E2 ubiquitin-conjugating enzyme]-L-cysteine + N(6)-ubiquitinyl-[acceptor protein]-L-lysine.. The protein operates within protein modification; protein ubiquitination. Its function is as follows. Probable ubiquitin ligase protein, which may be involved in mRNA export. E3 ubiquitin ligase proteins mediate ubiquitination and subsequent proteasomal degradation of target proteins. Participates in mRNA export from the nucleus by regulating the transport of hnRNP proteins. The protein is E3 ubiquitin-protein ligase TOM1-like of Neurospora crassa (strain ATCC 24698 / 74-OR23-1A / CBS 708.71 / DSM 1257 / FGSC 987).